The sequence spans 837 residues: Ribosome biogenesis ATPase RIX7 (837 aa).

Disordered regions lie at residues 36–56 (RSLRQESQGEEGENNEGEEDE) and 149–207 (ITST…LKSL). Residue serine 42 is modified to Phosphoserine. The segment covering 43–56 (QGEEGENNEGEEDE) has biased composition (acidic residues). The segment covering 149 to 163 (ITSTWSKSGSVSESI) has biased composition (polar residues). Positions 176 to 192 (KSKKRSKEGTCKVKRQK) are enriched in basic residues. An ATP-binding site is contributed by 246–253 (GPPGCGKT). The tract at residues 443-468 (PTTATDSSEDNMEIDETANGDESSLK) is disordered. A compositionally biased stretch (acidic residues) spans 449–461 (SSEDNMEIDETAN). Residue 574–581 (GPPGCGKT) coordinates ATP.

Belongs to the AAA ATPase family.

It localises to the nucleus. The protein resides in the nucleolus. In terms of biological role, involved in ribosome biogenesis. Seems to be required for restructuring nucleoplasmic 60S pre-ribosomal particles to make them competent for nuclear export. In Saccharomyces cerevisiae (strain ATCC 204508 / S288c) (Baker's yeast), this protein is Ribosome biogenesis ATPase RIX7 (RIX7).